The following is a 151-amino-acid chain: Cell division control protein 2 homolog 2 (151 aa).

The Protein kinase domain maps to 1–151 (ALKEIRMDNE…IMQTLQIESL (151 aa)). Lys3 serves as a coordination point for ATP. The active-site Proton acceptor is the Asp113.

The protein belongs to the protein kinase superfamily. CMGC Ser/Thr protein kinase family. CDC2/CDKX subfamily.

The enzyme catalyses L-seryl-[protein] + ATP = O-phospho-L-seryl-[protein] + ADP + H(+). It carries out the reaction L-threonyl-[protein] + ATP = O-phospho-L-threonyl-[protein] + ADP + H(+). The catalysed reaction is [DNA-directed RNA polymerase] + ATP = phospho-[DNA-directed RNA polymerase] + ADP + H(+). This is Cell division control protein 2 homolog 2 from Pisum sativum (Garden pea).